A 351-amino-acid polypeptide reads, in one-letter code: Uroporphyrinogen decarboxylase (351 aa).

Substrate is bound by residues 26 to 30 (RQAGR), Asp75, Tyr151, Ser206, and His321.

Belongs to the uroporphyrinogen decarboxylase family. In terms of assembly, homodimer.

The protein resides in the cytoplasm. The enzyme catalyses uroporphyrinogen III + 4 H(+) = coproporphyrinogen III + 4 CO2. It functions in the pathway porphyrin-containing compound metabolism; protoporphyrin-IX biosynthesis; coproporphyrinogen-III from 5-aminolevulinate: step 4/4. Functionally, catalyzes the decarboxylation of four acetate groups of uroporphyrinogen-III to yield coproporphyrinogen-III. This chain is Uroporphyrinogen decarboxylase, found in Koribacter versatilis (strain Ellin345).